A 203-amino-acid polypeptide reads, in one-letter code: ATP-dependent Clp protease proteolytic subunit (203 aa).

Catalysis depends on S107, which acts as the Nucleophile. H132 is an active-site residue.

This sequence belongs to the peptidase S14 family. In terms of assembly, fourteen ClpP subunits assemble into 2 heptameric rings which stack back to back to give a disk-like structure with a central cavity, resembling the structure of eukaryotic proteasomes.

The protein localises to the cytoplasm. It carries out the reaction Hydrolysis of proteins to small peptides in the presence of ATP and magnesium. alpha-casein is the usual test substrate. In the absence of ATP, only oligopeptides shorter than five residues are hydrolyzed (such as succinyl-Leu-Tyr-|-NHMec, and Leu-Tyr-Leu-|-Tyr-Trp, in which cleavage of the -Tyr-|-Leu- and -Tyr-|-Trp bonds also occurs).. Its function is as follows. Cleaves peptides in various proteins in a process that requires ATP hydrolysis. Has a chymotrypsin-like activity. Plays a major role in the degradation of misfolded proteins. The protein is ATP-dependent Clp protease proteolytic subunit of Shewanella denitrificans (strain OS217 / ATCC BAA-1090 / DSM 15013).